The sequence spans 446 residues: Exodeoxyribonuclease 7 large subunit (446 aa).

Belongs to the XseA family. Heterooligomer composed of large and small subunits.

It localises to the cytoplasm. The enzyme catalyses Exonucleolytic cleavage in either 5'- to 3'- or 3'- to 5'-direction to yield nucleoside 5'-phosphates.. Bidirectionally degrades single-stranded DNA into large acid-insoluble oligonucleotides, which are then degraded further into small acid-soluble oligonucleotides. The chain is Exodeoxyribonuclease 7 large subunit from Streptococcus pneumoniae serotype 19F (strain G54).